A 382-amino-acid polypeptide reads, in one-letter code: Glutamyl-tRNA reductase (382 aa).

Substrate is bound by residues 38–41, Ser-85, 90–92, and Gln-96; these read TCNR and ENQ. Cys-39 serves as the catalytic Nucleophile. 164–169 is a binding site for NADP(+); it reads GAGEMG.

Belongs to the glutamyl-tRNA reductase family. In terms of assembly, homodimer.

The catalysed reaction is (S)-4-amino-5-oxopentanoate + tRNA(Glu) + NADP(+) = L-glutamyl-tRNA(Glu) + NADPH + H(+). It participates in porphyrin-containing compound metabolism; protoporphyrin-IX biosynthesis; 5-aminolevulinate from L-glutamyl-tRNA(Glu): step 1/2. Its function is as follows. Catalyzes the NADPH-dependent reduction of glutamyl-tRNA(Glu) to glutamate 1-semialdehyde (GSA). In Methanococcus maripaludis (strain C5 / ATCC BAA-1333), this protein is Glutamyl-tRNA reductase.